The following is a 199-amino-acid chain: Pyridoxal 5'-phosphate synthase subunit PdxT (199 aa).

Residue 47–49 (GES) coordinates L-glutamine. Residue C79 is the Nucleophile of the active site. L-glutamine contacts are provided by residues R106 and 133-134 (IR). Catalysis depends on charge relay system residues H169 and E171.

The protein belongs to the glutaminase PdxT/SNO family. In terms of assembly, in the presence of PdxS, forms a dodecamer of heterodimers. Only shows activity in the heterodimer.

The catalysed reaction is aldehydo-D-ribose 5-phosphate + D-glyceraldehyde 3-phosphate + L-glutamine = pyridoxal 5'-phosphate + L-glutamate + phosphate + 3 H2O + H(+). It catalyses the reaction L-glutamine + H2O = L-glutamate + NH4(+). Its pathway is cofactor biosynthesis; pyridoxal 5'-phosphate biosynthesis. Catalyzes the hydrolysis of glutamine to glutamate and ammonia as part of the biosynthesis of pyridoxal 5'-phosphate. The resulting ammonia molecule is channeled to the active site of PdxS. This chain is Pyridoxal 5'-phosphate synthase subunit PdxT, found in Desulfitobacterium hafniense (strain Y51).